A 904-amino-acid polypeptide reads, in one-letter code: Alpha-actinin-4 (904 aa).

Residues 1–27 (MVDYHSAGQPYPYGGNGPGPNGDYMAQ) are disordered. The segment at 1–259 (MVDYHSAGQP…IMTYVSSFYH (259 aa)) is actin-binding. Calponin-homology (CH) domains are found at residues 43–147 (KQQR…LRFA) and 156–262 (TSAK…HAFS). Spectrin repeat units follow at residues 286 to 396 (HLME…WLLN), 406 to 511 (HLAE…ALEK), 521 to 632 (ELHL…ALQD), and 642 to 745 (RLRR…EVEN). 2 consecutive EF-hand domains span residues 758–793 (EQMQ…LGYD) and 799–834 (QGDA…ETTD). Asp771, Asp773, Glu782, Asp812, Asn814, Ser816, and Ser818 together coordinate Ca(2+).

It belongs to the alpha-actinin family. In terms of assembly, homodimer; antiparallel. Component of the CART complex. May interact with nuclear receptors.

Its subcellular location is the nucleus. The protein resides in the cytoplasm. The protein localises to the cell junction. It is found in the perinuclear region. Its function is as follows. F-actin cross-linking protein which is thought to anchor actin to a variety of intracellular structures. This is a bundling protein. Probably involved in vesicular trafficking via its association with the CART complex. Involved in tight junction assembly in epithelial cells. May also function as a transcriptional coactivator, stimulating transcription mediated by nuclear hormone receptors. This Gallus gallus (Chicken) protein is Alpha-actinin-4.